Consider the following 409-residue polypeptide: Nucleoprotein (409 aa).

Disordered regions lie at residues M1–N32, S46–R84, A121–D194, and V238–N259. Residues S29–L160 form an RNA-binding region. The region spanning G31 to D156 is the CoV N NTD domain. Over residues Y70–R84 the composition is skewed to basic residues. A compositionally biased stretch (low complexity) spans R162 to P179. Basic and acidic residues-rich tracts occupy residues P180–S192 and K247–N259. S190 and S192 each carry phosphoserine; by host. The CoV N CTD domain occupies T215 to P331. Positions R226–D333 are dimerization. Residues C320 and C323 are joined by a disulfide bond. A disordered region spans residues G326–L409. A compositionally biased stretch (low complexity) spans R341–R356. Residues Q358–K367 show a composition bias toward basic residues. The segment covering K368–N384 has biased composition (basic and acidic residues). A Phosphothreonine; by host modification is found at T378. S379 bears the Phosphoserine; by host mark.

The protein belongs to the gammacoronavirus nucleocapsid protein family. As to quaternary structure, homooligomer. Both monomeric and oligomeric forms interact with RNA. Interacts with protein M. Interacts with NSP3; this interaction serves to tether the genome to the newly translated replicase-transcriptase complex at a very early stage of infection. Post-translationally, ADP-ribosylated. The ADP-ribosylation is retained in the virion during infection. Phosphorylated on serine and threonine residues.

Its subcellular location is the virion. The protein localises to the host endoplasmic reticulum-Golgi intermediate compartment. It is found in the host Golgi apparatus. Functionally, packages the positive strand viral genome RNA into a helical ribonucleocapsid (RNP) and plays a fundamental role during virion assembly through its interactions with the viral genome and membrane protein M. Plays an important role in enhancing the efficiency of subgenomic viral RNA transcription as well as viral replication. This is Nucleoprotein from Avian infectious bronchitis virus (strain Gray) (IBV).